The following is a 173-amino-acid chain: Alpha-crystallin A chain (173 aa).

Residue Met-1 is modified to N-acetylmethionine. Residues Met-1–Glu-63 form a required for complex formation with BFSP1 and BFSP2 region. Gln-6 is subject to Deamidated glutamine; partial. Ser-45 carries the phosphoserine modification. Gln-50 is modified (deamidated glutamine; partial). The sHSP domain occupies Val-52–Ser-162. N6-acetyllysine is present on residues Lys-70 and Lys-99. Zn(2+) is bound at residue His-100. Position 101 is a deamidated asparagine; partial (Asn-101). Positions 102 and 107 each coordinate Zn(2+). Phosphoserine is present on Ser-122. Residue Asn-123 is modified to Deamidated asparagine; partial. Residues Pro-144–Ser-173 form a disordered region. Residues Gly-153–Pro-167 show a composition bias toward basic and acidic residues. His-154 contacts Zn(2+). An O-linked (GlcNAc) serine glycan is attached at Ser-162.

It belongs to the small heat shock protein (HSP20) family. Heteromer composed of three CRYAA and one CRYAB subunits. Inter-subunit bridging via zinc ions enhances stability, which is crucial as there is no protein turn over in the lens. Can also form homodimers and homotetramers (dimers of dimers) which serve as the building blocks of homooligomers. Within homooligomers, the zinc-binding motif is created from residues of 3 different molecules. His-100 and Glu-102 from one molecule are ligands of the zinc ion, and His-107 and His-154 residues from additional molecules complete the site with tetrahedral coordination geometry. Part of a complex required for lens intermediate filament formation composed of BFSP1, BFSP2 and CRYAA. Acetylation at Lys-70 may increase chaperone activity. In terms of processing, undergoes age-dependent proteolytical cleavage at the C-terminus.

The protein resides in the cytoplasm. Its subcellular location is the nucleus. Its function is as follows. Contributes to the transparency and refractive index of the lens. Acts as a chaperone, preventing aggregation of various proteins under a wide range of stress conditions. Required for the correct formation of lens intermediate filaments as part of a complex composed of BFSP1, BFSP2 and CRYAA. This chain is Alpha-crystallin A chain (CRYAA), found in Halichoerus grypus (Gray seal).